The following is a 524-amino-acid chain: GMP synthase [glutamine-hydrolyzing] (524 aa).

The 191-residue stretch at Lys-5–Thr-195 folds into the Glutamine amidotransferase type-1 domain. The active-site Nucleophile is Cys-82. Active-site residues include His-169 and Glu-171. Residues Trp-196–Arg-389 form the GMPS ATP-PPase domain. Ser-223–Ser-229 provides a ligand contact to ATP.

Homodimer.

It catalyses the reaction XMP + L-glutamine + ATP + H2O = GMP + L-glutamate + AMP + diphosphate + 2 H(+). It functions in the pathway purine metabolism; GMP biosynthesis; GMP from XMP (L-Gln route): step 1/1. Catalyzes the synthesis of GMP from XMP. In Lachnospira eligens (strain ATCC 27750 / DSM 3376 / VPI C15-48 / C15-B4) (Eubacterium eligens), this protein is GMP synthase [glutamine-hydrolyzing].